A 259-amino-acid polypeptide reads, in one-letter code: MLAKRIVPCLDVKDGKVVKGVQFRNHEIVGDIVPLAARYAQEGADELVFYDISASAKGAIVDKSWVSRIAERIDIPFCVAGGIKTAEQAREILAFGADKISINSPALSDPSLIRRLHDEFGRQCVVVGIDSFYDAGSGNYTVKQFTGDEAATKDTRWHTLDWVEEVQRQGCGEIVLNVMNQDGVRQGYDIEQLLKVRAICDVPLIASGGAGTMAHFAEVFTDARVDAALAASVFHKGIINIGELKQFLVSQGIAIRLTE.

Residues Asp11 and Asp130 contribute to the active site.

Belongs to the HisA/HisF family. Heterodimer of HisH and HisF.

The protein resides in the cytoplasm. It catalyses the reaction 5-[(5-phospho-1-deoxy-D-ribulos-1-ylimino)methylamino]-1-(5-phospho-beta-D-ribosyl)imidazole-4-carboxamide + L-glutamine = D-erythro-1-(imidazol-4-yl)glycerol 3-phosphate + 5-amino-1-(5-phospho-beta-D-ribosyl)imidazole-4-carboxamide + L-glutamate + H(+). Its pathway is amino-acid biosynthesis; L-histidine biosynthesis; L-histidine from 5-phospho-alpha-D-ribose 1-diphosphate: step 5/9. IGPS catalyzes the conversion of PRFAR and glutamine to IGP, AICAR and glutamate. The HisF subunit catalyzes the cyclization activity that produces IGP and AICAR from PRFAR using the ammonia provided by the HisH subunit. The chain is Imidazole glycerol phosphate synthase subunit HisF from Shewanella amazonensis (strain ATCC BAA-1098 / SB2B).